Reading from the N-terminus, the 175-residue chain is Cytochrome c homolog (175 aa).

Over 1 to 8 the chain is Cytoplasmic; that stretch reads MTGKELNK. The helical; Signal-anchor transmembrane segment at 9-29 threads the bilayer; that stretch reads IVAAILFASLIAMIVRFVANI. The Periplasmic portion of the chain corresponds to 30-175; the sequence is LYKPNLQVLN…LFLKNYVHDK (146 aa). Heme c contacts are provided by C84, C87, H88, and M150.

It belongs to the cytochrome c family. Binds 1 heme c group covalently per subunit.

The protein localises to the cell membrane. Its function is as follows. May be involved in electron transfer from bc1 complex to aa3. In Rickettsia typhi (strain ATCC VR-144 / Wilmington), this protein is Cytochrome c homolog (cycM).